The following is a 431-amino-acid chain: Putative F-box/FBD/LRR-repeat protein At3g56780 (431 aa).

An F-box domain is found at Cys6 to Phe62. 8 LRR repeats span residues His56–Leu82, Asn88–Ala113, Leu135–His161, Ser162–Arg187, Leu209–Arg236, Met237–Glu262, Thr264–Thr285, and Cys357–His382. One can recognise an FBD domain in the interval Arg391 to Leu423.

This is Putative F-box/FBD/LRR-repeat protein At3g56780 from Arabidopsis thaliana (Mouse-ear cress).